The following is a 242-amino-acid chain: Triosephosphate isomerase (242 aa).

9–11 (NWK) provides a ligand contact to substrate. Residue His90 is the Electrophile of the active site. The active-site Proton acceptor is the Glu162. Substrate-binding positions include Gly168, Ser205, and 226–227 (GG).

Belongs to the triosephosphate isomerase family. In terms of assembly, homodimer.

It localises to the cytoplasm. It catalyses the reaction D-glyceraldehyde 3-phosphate = dihydroxyacetone phosphate. It participates in carbohydrate biosynthesis; gluconeogenesis. Its pathway is carbohydrate degradation; glycolysis; D-glyceraldehyde 3-phosphate from glycerone phosphate: step 1/1. In terms of biological role, involved in the gluconeogenesis. Catalyzes stereospecifically the conversion of dihydroxyacetone phosphate (DHAP) to D-glyceraldehyde-3-phosphate (G3P). The protein is Triosephosphate isomerase of Azoarcus sp. (strain BH72).